The following is a 173-amino-acid chain: Alpha-crystallin A chain (173 aa).

M1 bears the N-acetylmethionine mark. A required for complex formation with BFSP1 and BFSP2 region spans residues 1 to 63; it reads MDIAIQHPWF…RTVLDSGISE (63 aa). Q6 is modified (deamidated glutamine; partial). S45 is subject to Phosphoserine. A Deamidated glutamine; partial modification is found at Q50. Residues 52-162 form the sHSP domain; that stretch reads LFRTVLDSGI…GHSERAIPVS (111 aa). At K70 the chain carries N6-acetyllysine. Position 90 is a deamidated glutamine; partial (Q90). The residue at position 99 (K99) is an N6-acetyllysine. A Zn(2+)-binding site is contributed by H100. The residue at position 101 (N101) is a Deamidated asparagine; partial. Zn(2+)-binding residues include E102 and H107. S122 bears the Phosphoserine mark. N123 carries the deamidated asparagine; partial modification. The interval 144-173 is disordered; sequence PKVPSGLDAGHSERAIPVSREEKPSSAPSS. Residues 153-167 are compositionally biased toward basic and acidic residues; that stretch reads GHSERAIPVSREEKP. Residue H154 participates in Zn(2+) binding. Residue S162 is glycosylated (O-linked (GlcNAc) serine).

This sequence belongs to the small heat shock protein (HSP20) family. In terms of assembly, heteromer composed of three CRYAA and one CRYAB subunits. Inter-subunit bridging via zinc ions enhances stability, which is crucial as there is no protein turn over in the lens. Can also form homodimers and homotetramers (dimers of dimers) which serve as the building blocks of homooligomers. Within homooligomers, the zinc-binding motif is created from residues of 3 different molecules. His-100 and Glu-102 from one molecule are ligands of the zinc ion, and His-107 and His-154 residues from additional molecules complete the site with tetrahedral coordination geometry. Part of a complex required for lens intermediate filament formation composed of BFSP1, BFSP2 and CRYAA. Post-translationally, acetylation at Lys-70 may increase chaperone activity. Undergoes age-dependent proteolytical cleavage at the C-terminus.

It is found in the cytoplasm. The protein localises to the nucleus. In terms of biological role, contributes to the transparency and refractive index of the lens. Acts as a chaperone, preventing aggregation of various proteins under a wide range of stress conditions. Required for the correct formation of lens intermediate filaments as part of a complex composed of BFSP1, BFSP2 and CRYAA. The sequence is that of Alpha-crystallin A chain (CRYAA) from Tapirus indicus (Asiatic tapir).